The sequence spans 1026 residues: Multidrug resistance protein MdtC (1026 aa).

The next 12 membrane-spanning stretches (helical) occupy residues 12-32 (VATL…FRLL), 333-353 (EVEQ…FLFL), 360-380 (AIPA…MYLC), 387-407 (LSLM…IVVL), 431-451 (VGFT…PLLL), 463-483 (FAVT…TLTP), 528-548 (WVLL…ISIP), 853-873 (LLLI…LYES), 875-895 (VHPL…LLAL), 897-917 (WFGA…IGIV), 953-973 (PIMM…LTSG), and 984-1004 (ITIV…TPVV).

This sequence belongs to the resistance-nodulation-cell division (RND) (TC 2.A.6) family. MdtC subfamily. As to quaternary structure, part of a tripartite efflux system composed of MdtA, MdtB and MdtC. MdtC forms a heteromultimer with MdtB.

Its subcellular location is the cell inner membrane. This chain is Multidrug resistance protein MdtC, found in Pectobacterium carotovorum subsp. carotovorum (strain PC1).